Reading from the N-terminus, the 90-residue chain is Small ribosomal subunit protein uS15c (90 aa).

Belongs to the universal ribosomal protein uS15 family. As to quaternary structure, part of the 30S ribosomal subunit.

It localises to the plastid. The polypeptide is Small ribosomal subunit protein uS15c (rps15) (Cuscuta reflexa (Southern Asian dodder)).